Here is a 557-residue protein sequence, read N- to C-terminus: Membrane protein insertase YidC (557 aa).

5 helical membrane-spanning segments follow: residues 6 to 26 (TILWAVFSLSGLMLYNNWQVH), 219 to 239 (IGPFGGAFSASTFTGPAIYTD), 367 to 387 (IVGNWGWSIILLTVLIKLAFF), 437 to 457 (LGGCLPVVIQIPVFISLYWVL), and 514 to 534 (MPIVFSIMFFFFPAGLVLYWV).

This sequence belongs to the OXA1/ALB3/YidC family. Type 1 subfamily. In terms of assembly, interacts with the Sec translocase complex via SecD. Specifically interacts with transmembrane segments of nascent integral membrane proteins during membrane integration.

It localises to the cell inner membrane. Required for the insertion and/or proper folding and/or complex formation of integral membrane proteins into the membrane. Involved in integration of membrane proteins that insert both dependently and independently of the Sec translocase complex, as well as at least some lipoproteins. Aids folding of multispanning membrane proteins. The protein is Membrane protein insertase YidC of Polynucleobacter asymbioticus (strain DSM 18221 / CIP 109841 / QLW-P1DMWA-1) (Polynucleobacter necessarius subsp. asymbioticus).